A 520-amino-acid chain; its full sequence is AMP-binding domain-containing enzyme iboA (520 aa).

180–191 contributes to the ATP binding site; sequence LTSGSTSGSPKV. The short motif at 397–447 is the FACS element; it reads DGNFHTGDLFEKQLDGSYLFRGRGDDWIKSEDSRFIDTKAIEEKINDVCSD.

It belongs to the ATP-dependent AMP-binding enzyme family. It depends on Mg(2+) as a cofactor.

Its pathway is secondary metabolite biosynthesis. Functionally, AMP-binding domain-containing enzyme; part of the gene cluster that mediates the biosynthesis of the psychoactive metabolites ibotenic acid and muscimol. The first committed step is glutamate hydroxylation by the 2-oxoglutarate-dependent dioxygenase iboH, and the last step is decarboxylation of ibotenic acid to muscimol by the decarboxylase iboD. The order of the intermediate reactions is somewhat ambiguous. IboA likely activates the carboxylic acid at position 5 to introduce an amide bond, and the flavin monooxygenase iboF generates the N-O bond. There are several options for the latter step. One option is that iboF directly hydroxylates the amide nitrogen formed by iboA to produce a hydroxamic acid species. Another option is that iboF hydroxylates an external N-containing compound, whose resulting N-O bond is subsequently introduced into the hydroxyglutamate scaffold. The paralogous PLP-dependent cystathionine gamma-synthase-like enzymes iboG1 and iboG2 are likely involved in substitution of the OH group at position 3 by the O-N moiety. The first cyclic intermediate is most probably tricholomic acid which is likely desaturated to ibotenic acid by the cytochrome P450 monooxygenase iboC. This is AMP-binding domain-containing enzyme iboA from Amanita muscaria (strain Koide BX008).